Reading from the N-terminus, the 153-residue chain is 6,7-dimethyl-8-ribityllumazine synthase (153 aa).

Residues Phe-21, 55-57 (AFE), and 79-81 (TVI) each bind 5-amino-6-(D-ribitylamino)uracil. A (2S)-2-hydroxy-3-oxobutyl phosphate-binding site is contributed by 84 to 85 (AT). The Proton donor role is filled by His-87. Phe-112 provides a ligand contact to 5-amino-6-(D-ribitylamino)uracil. Arg-126 serves as a coordination point for (2S)-2-hydroxy-3-oxobutyl phosphate.

Belongs to the DMRL synthase family. In terms of assembly, forms an icosahedral capsid composed of 60 subunits, arranged as a dodecamer of pentamers.

The catalysed reaction is (2S)-2-hydroxy-3-oxobutyl phosphate + 5-amino-6-(D-ribitylamino)uracil = 6,7-dimethyl-8-(1-D-ribityl)lumazine + phosphate + 2 H2O + H(+). It functions in the pathway cofactor biosynthesis; riboflavin biosynthesis; riboflavin from 2-hydroxy-3-oxobutyl phosphate and 5-amino-6-(D-ribitylamino)uracil: step 1/2. Functionally, catalyzes the formation of 6,7-dimethyl-8-ribityllumazine by condensation of 5-amino-6-(D-ribitylamino)uracil with 3,4-dihydroxy-2-butanone 4-phosphate. This is the penultimate step in the biosynthesis of riboflavin. This chain is 6,7-dimethyl-8-ribityllumazine synthase, found in Bacillus cereus (strain G9842).